The sequence spans 306 residues: Ribosomal RNA small subunit methyltransferase H (306 aa).

Residues G33 to Y35, D51, F78, D96, and Q103 each bind S-adenosyl-L-methionine.

It belongs to the methyltransferase superfamily. RsmH family.

It is found in the cytoplasm. It catalyses the reaction cytidine(1402) in 16S rRNA + S-adenosyl-L-methionine = N(4)-methylcytidine(1402) in 16S rRNA + S-adenosyl-L-homocysteine + H(+). Functionally, specifically methylates the N4 position of cytidine in position 1402 (C1402) of 16S rRNA. The chain is Ribosomal RNA small subunit methyltransferase H from Rickettsia typhi (strain ATCC VR-144 / Wilmington).